The following is a 188-amino-acid chain: Elongation factor P (188 aa).

This sequence belongs to the elongation factor P family.

It is found in the cytoplasm. Its pathway is protein biosynthesis; polypeptide chain elongation. Involved in peptide bond synthesis. Stimulates efficient translation and peptide-bond synthesis on native or reconstituted 70S ribosomes in vitro. Probably functions indirectly by altering the affinity of the ribosome for aminoacyl-tRNA, thus increasing their reactivity as acceptors for peptidyl transferase. The protein is Elongation factor P of Methylobacterium radiotolerans (strain ATCC 27329 / DSM 1819 / JCM 2831 / NBRC 15690 / NCIMB 10815 / 0-1).